The chain runs to 166 residues: Large ribosomal subunit protein uL10 (166 aa).

The protein belongs to the universal ribosomal protein uL10 family. As to quaternary structure, part of the ribosomal stalk of the 50S ribosomal subunit. The N-terminus interacts with L11 and the large rRNA to form the base of the stalk. The C-terminus forms an elongated spine to which L12 dimers bind in a sequential fashion forming a multimeric L10(L12)X complex.

Its function is as follows. Forms part of the ribosomal stalk, playing a central role in the interaction of the ribosome with GTP-bound translation factors. This chain is Large ribosomal subunit protein uL10, found in Staphylococcus haemolyticus (strain JCSC1435).